We begin with the raw amino-acid sequence, 642 residues long: Threonine--tRNA ligase (642 aa).

The TGS domain occupies 1-61 (MPVITLPDGS…ETDAELSIIT (61 aa)). Residues 243 to 534 (DHRKIGKQLD…LIEEYAGRFP (292 aa)) are catalytic. 3 residues coordinate Zn(2+): C334, H385, and H511.

The protein belongs to the class-II aminoacyl-tRNA synthetase family. Homodimer. Requires Zn(2+) as cofactor.

It is found in the cytoplasm. The enzyme catalyses tRNA(Thr) + L-threonine + ATP = L-threonyl-tRNA(Thr) + AMP + diphosphate + H(+). Catalyzes the attachment of threonine to tRNA(Thr) in a two-step reaction: L-threonine is first activated by ATP to form Thr-AMP and then transferred to the acceptor end of tRNA(Thr). Also edits incorrectly charged L-seryl-tRNA(Thr). The chain is Threonine--tRNA ligase from Shewanella sp. (strain MR-7).